The following is a 599-amino-acid chain: Elongation factor 4 (599 aa).

Residues 2–184 form the tr-type G domain; sequence KNIRNFSIIA…EIVAKIPAPK (183 aa). GTP-binding positions include 14 to 19 and 131 to 134; these read DHGKST and NKID.

It belongs to the TRAFAC class translation factor GTPase superfamily. Classic translation factor GTPase family. LepA subfamily.

The protein resides in the cell inner membrane. The enzyme catalyses GTP + H2O = GDP + phosphate + H(+). In terms of biological role, required for accurate and efficient protein synthesis under certain stress conditions. May act as a fidelity factor of the translation reaction, by catalyzing a one-codon backward translocation of tRNAs on improperly translocated ribosomes. Back-translocation proceeds from a post-translocation (POST) complex to a pre-translocation (PRE) complex, thus giving elongation factor G a second chance to translocate the tRNAs correctly. Binds to ribosomes in a GTP-dependent manner. In Mannheimia succiniciproducens (strain KCTC 0769BP / MBEL55E), this protein is Elongation factor 4.